The primary structure comprises 359 residues: Peptide chain release factor 1 (359 aa).

Q236 bears the N5-methylglutamine mark.

It belongs to the prokaryotic/mitochondrial release factor family. Post-translationally, methylated by PrmC. Methylation increases the termination efficiency of RF1.

The protein resides in the cytoplasm. Its function is as follows. Peptide chain release factor 1 directs the termination of translation in response to the peptide chain termination codons UAG and UAA. This chain is Peptide chain release factor 1 (prfA), found in Mycoplasma pneumoniae (strain ATCC 29342 / M129 / Subtype 1) (Mycoplasmoides pneumoniae).